We begin with the raw amino-acid sequence, 495 residues long: NADH-ubiquinone oxidoreductase chain 4 (495 aa).

14 consecutive transmembrane segments (helical) span residues 9–29, 37–57, 89–109, 118–138, 139–159, 173–193, 214–234, 245–265, 272–292, 307–327, 335–355, 367–387, 413–433, and 457–477; these read YSNLSGLILLPLLGSLIILVI, IRGITIWTSLITFLYSLFFWI, ISLFFVILTTFLTPICILVGF, EYMIAFFICESFLIAVFCSLD, LLIFYVFFESVLIPMFIIIGV, FFLYTLMGSLFMLLAILFIFF, ILLWIAFFASFSVKVPMVPVH, PTAGSVILAGILLKLGTYGFL, FPEATLYFTPFIYTLSVIAII, IIAYSSVAHMNFVTIGMFSLN, ILLMLSHGLVSSALFLCVGAL, YGGLVSTMPIFSTIFLFFTLA, LVATLAALGMILGAAYSLWLY, and VLIFLPFIVGVIWMGVYPEVF.

Belongs to the complex I subunit 4 family.

It localises to the mitochondrion membrane. The enzyme catalyses a ubiquinone + NADH + 5 H(+)(in) = a ubiquinol + NAD(+) + 4 H(+)(out). Functionally, core subunit of the mitochondrial membrane respiratory chain NADH dehydrogenase (Complex I) that is believed to belong to the minimal assembly required for catalysis. Complex I functions in the transfer of electrons from NADH to the respiratory chain. The immediate electron acceptor for the enzyme is believed to be ubiquinone. This Marchantia polymorpha (Common liverwort) protein is NADH-ubiquinone oxidoreductase chain 4 (ND4).